The sequence spans 634 residues: 1-phosphatidylinositol 4,5-bisphosphate phosphodiesterase zeta-1 (634 aa).

In terms of domain architecture, EF-hand spans 35–70; that stretch reads CNTIHVKYIFKDNDRLKQGRITIEEFRTIYRIITYR. The 145-residue stretch at 155–299 folds into the PI-PLC X-box domain; sequence QDMTHPLTDY…LKFKILVRNK (145 aa). Residues H170 and H215 contribute to the active site. Positions 312–345 are disordered; the sequence is GSDMHGKVEEFEEEEEIEQEEDGSGAKEPEPVGD. The span at 321–334 shows a compositional bias: acidic residues; that stretch reads EFEEEEEIEQEEDG. The 117-residue stretch at 376-492 folds into the PI-PLC Y-box domain; it reads LSDLVIYTKV…GYVLKPRFLR (117 aa). In terms of domain architecture, C2 spans 492–615; sequence RDKKTKFNPH…RGYRRVPLFS (124 aa).

Interacts (via its C2 domain) with PtdIns(3)P and, to a lesser extent, PtdIns(5)P in vitro. Requires Ca(2+) as cofactor.

The protein resides in the nucleus. It localises to the cytoplasm. The protein localises to the perinuclear region. The enzyme catalyses a 1,2-diacyl-sn-glycero-3-phospho-(1D-myo-inositol-4,5-bisphosphate) + H2O = 1D-myo-inositol 1,4,5-trisphosphate + a 1,2-diacyl-sn-glycerol + H(+). Its function is as follows. The production of the second messenger molecules diacylglycerol (DAG) and inositol 1,4,5-trisphosphate (IP3) is mediated by activated phosphatidylinositol-specific phospholipase C enzymes. In vitro, hydrolyzes PtdIns(4,5)P2 in a Ca(2+)-dependent manner. Triggers intracellular Ca(2+) oscillations in oocytes solely during M phase and is involved in inducing oocyte activation and initiating embryonic development up to the blastocyst stage. Is therefore a strong candidate for the egg-activating soluble sperm factor that is transferred from the sperm into the egg cytoplasm following gamete membrane fusion. May exert an inhibitory effect on phospholipase-C-coupled processes that depend on calcium ions and protein kinase C, including CFTR trafficking and function. The sequence is that of 1-phosphatidylinositol 4,5-bisphosphate phosphodiesterase zeta-1 from Bos taurus (Bovine).